Consider the following 328-residue polypeptide: Reticulocalbin-3 (328 aa).

Positions 1–20 (MMWRWTLMLLLLLLRHWALG) are cleaved as a signal peptide. The interval 24 to 48 (PDAGPHGQDRVHHGTPLSEAPHDDA) is disordered. EF-hand domains follow at residues 75–112 (ESQARLGRIVDRMDLAGDSDGWVSLAELRAWIAHTQQR), 113–148 (HIRDSVSAAWHTYDTDRDGRVGWEELRNATYGHYEP), 163–198 (KMLARDERRFRVADQDGDSMATREELTAFLHPEEFP), 200–235 (MRDIVVAETLEDLDKNKDGYVQVEEYIADLYSAEPG), 241–276 (WVQTERQQFRDFRDLNKDGRLDGSEVGYWVLPPSQD), and 277–312 (QPLVEANHLLHESDTDKDGRLSKAEILSNWNMFVGS). Positions 92, 94, 96, 101, 126, 128, 130, 132, and 137 each coordinate Ca(2+). Asn140 carries N-linked (GlcNAc...) asparagine glycosylation. 20 residues coordinate Ca(2+): Asp176, Asp178, Asp180, Met182, Glu187, Asp213, Asn215, Asp217, Tyr219, Glu224, Asp254, Asn256, Asp258, Arg260, Glu265, Asp290, Asp292, Asp294, Arg296, and Glu301. A Prevents secretion from ER motif is present at residues 325 to 328 (HDEL).

Belongs to the CREC family. In terms of assembly, interacts with PCSK6 (immature form including the propeptide); probably involved in the maturation and the secretion of PCSK6. In terms of processing, N-glycosylated. Post-translationally, degraded by PCSK6 and other endoproteases including FURIN and PCSK5.

The protein resides in the endoplasmic reticulum lumen. Its function is as follows. Probable molecular chaperone assisting protein biosynthesis and transport in the endoplasmic reticulum. Required for the proper biosynthesis and transport of pulmonary surfactant-associated protein A/SP-A, pulmonary surfactant-associated protein D/SP-D and the lipid transporter ABCA3. By regulating both the proper expression and the degradation through the endoplasmic reticulum-associated protein degradation pathway of these proteins plays a crucial role in pulmonary surfactant homeostasis. Has an anti-fibrotic activity by negatively regulating the secretion of type I and type III collagens. This calcium-binding protein also transiently associates with immature PCSK6 and regulates its secretion. This Rattus norvegicus (Rat) protein is Reticulocalbin-3.